Consider the following 397-residue polypeptide: Monooxygenase 1 (397 aa).

Belongs to the 3-hydroxybenzoate 6-hydroxylase family. As to quaternary structure, monomer. FAD serves as cofactor. In terms of tissue distribution, expressed in seedlings, roots, leaves, flowers and siliques.

The polypeptide is Monooxygenase 1 (Arabidopsis thaliana (Mouse-ear cress)).